The following is a 438-amino-acid chain: Coenzyme A disulfide reductase (438 aa).

8-33 lines the FAD pocket; sequence GAVAGGATCASQIRRLDKESDIIIFE. Residues Thr-15, Gln-19, Arg-22, Ser-39, and Asn-42 each contribute to the substrate site. The active-site Nucleophile is the Cys-43. Cys-43 acts as the Redox-active in catalysis. Residue Lys-71 coordinates substrate. 151-166 serves as a coordination point for NADP(+); the sequence is VLVVGAGYVSLEVLEN. 267 to 277 contacts FAD; sequence TNVPNIYVIGD. His-299 lines the substrate pocket. An FAD-binding site is contributed by Tyr-419. Lys-427 contacts substrate.

Belongs to the class-III pyridine nucleotide-disulfide oxidoreductase family. As to quaternary structure, homodimer. It depends on FAD as a cofactor.

It carries out the reaction NADP(+) + 2 CoA = CoA-disulfide + NADPH + H(+). In terms of biological role, catalyzes specifically the NADPH-dependent reduction of coenzyme A disulfide. The chain is Coenzyme A disulfide reductase from Staphylococcus aureus (strain MRSA252).